The primary structure comprises 407 residues: Peptidase T (407 aa).

His-77 is a binding site for Zn(2+). Asp-79 is a catalytic residue. Asp-140 is a Zn(2+) binding site. The active-site Proton acceptor is the Glu-174. Glu-175, Asp-197, and His-379 together coordinate Zn(2+).

The protein belongs to the peptidase M20B family. Zn(2+) serves as cofactor.

The protein localises to the cytoplasm. The catalysed reaction is Release of the N-terminal residue from a tripeptide.. Cleaves the N-terminal amino acid of tripeptides. The polypeptide is Peptidase T (Bacteroides fragilis (strain YCH46)).